A 376-amino-acid chain; its full sequence is TelA-like protein SE_1089 (376 aa).

It belongs to the TelA family.

The sequence is that of TelA-like protein SE_1089 from Staphylococcus epidermidis (strain ATCC 12228 / FDA PCI 1200).